The following is a 378-amino-acid chain: Uroporphyrinogen decarboxylase (378 aa).

Substrate contacts are provided by residues 40–44 (RQAGR), Asp90, Tyr167, Ser222, and His355.

This sequence belongs to the uroporphyrinogen decarboxylase family. Homodimer.

It localises to the cytoplasm. It catalyses the reaction uroporphyrinogen III + 4 H(+) = coproporphyrinogen III + 4 CO2. The protein operates within porphyrin-containing compound metabolism; protoporphyrin-IX biosynthesis; coproporphyrinogen-III from 5-aminolevulinate: step 4/4. In terms of biological role, catalyzes the decarboxylation of four acetate groups of uroporphyrinogen-III to yield coproporphyrinogen-III. In Psychrobacter arcticus (strain DSM 17307 / VKM B-2377 / 273-4), this protein is Uroporphyrinogen decarboxylase.